A 470-amino-acid polypeptide reads, in one-letter code: Cysteine--tRNA ligase (470 aa).

Cys-30 provides a ligand contact to Zn(2+). Positions 32-42 match the 'HIGH' region motif; it reads PTVYNYIHIGN. 3 residues coordinate Zn(2+): Cys-211, His-236, and Glu-240. A 'KMSKS' region motif is present at residues 268–272; the sequence is KMSKS. Lys-271 contributes to the ATP binding site.

This sequence belongs to the class-I aminoacyl-tRNA synthetase family. As to quaternary structure, monomer. It depends on Zn(2+) as a cofactor.

It is found in the cytoplasm. It carries out the reaction tRNA(Cys) + L-cysteine + ATP = L-cysteinyl-tRNA(Cys) + AMP + diphosphate. This Fervidobacterium nodosum (strain ATCC 35602 / DSM 5306 / Rt17-B1) protein is Cysteine--tRNA ligase.